Consider the following 430-residue polypeptide: tRNA(Ile)-lysidine synthase (430 aa).

Ser-27 to Ser-32 is an ATP binding site.

Belongs to the tRNA(Ile)-lysidine synthase family.

The protein resides in the cytoplasm. It catalyses the reaction cytidine(34) in tRNA(Ile2) + L-lysine + ATP = lysidine(34) in tRNA(Ile2) + AMP + diphosphate + H(+). Its function is as follows. Ligates lysine onto the cytidine present at position 34 of the AUA codon-specific tRNA(Ile) that contains the anticodon CAU, in an ATP-dependent manner. Cytidine is converted to lysidine, thus changing the amino acid specificity of the tRNA from methionine to isoleucine. This is tRNA(Ile)-lysidine synthase from Rickettsia bellii (strain OSU 85-389).